The chain runs to 1002 residues: Transposase for transposon gamma-delta (1002 aa).

The protein belongs to the transposase 7 family.

Functionally, required for transposition of transposon Tn1000. The chain is Transposase for transposon gamma-delta (tnpA) from Escherichia coli (strain K12).